The following is a 194-amino-acid chain: Fe/S biogenesis protein NfuA (194 aa).

Residues C152 and C155 each coordinate [4Fe-4S] cluster.

This sequence belongs to the NfuA family. In terms of assembly, homodimer. [4Fe-4S] cluster is required as a cofactor.

Its function is as follows. Involved in iron-sulfur cluster biogenesis. Binds a 4Fe-4S cluster, can transfer this cluster to apoproteins, and thereby intervenes in the maturation of Fe/S proteins. Could also act as a scaffold/chaperone for damaged Fe/S proteins. This Stutzerimonas stutzeri (strain A1501) (Pseudomonas stutzeri) protein is Fe/S biogenesis protein NfuA.